We begin with the raw amino-acid sequence, 330 residues long: Uroporphyrinogen decarboxylase (330 aa).

Substrate contacts are provided by residues 10 to 14 (RQAGR), Phe-29, Ser-59, Asp-60, Tyr-137, Ser-192, and His-307.

Belongs to the uroporphyrinogen decarboxylase family. Homodimer.

It is found in the plastid. Its subcellular location is the chloroplast. It catalyses the reaction uroporphyrinogen III + 4 H(+) = coproporphyrinogen III + 4 CO2. It participates in porphyrin-containing compound metabolism; protoporphyrin-IX biosynthesis; coproporphyrinogen-III from 5-aminolevulinate: step 4/4. Its function is as follows. Catalyzes the decarboxylation of four acetate groups of uroporphyrinogen-III to yield coproporphyrinogen-III. This is Uroporphyrinogen decarboxylase (DCUP) from Hordeum vulgare (Barley).